The following is a 116-amino-acid chain: Ribosome-binding factor A (116 aa).

This sequence belongs to the RbfA family. As to quaternary structure, monomer. Binds 30S ribosomal subunits, but not 50S ribosomal subunits or 70S ribosomes.

It localises to the cytoplasm. One of several proteins that assist in the late maturation steps of the functional core of the 30S ribosomal subunit. Associates with free 30S ribosomal subunits (but not with 30S subunits that are part of 70S ribosomes or polysomes). Required for efficient processing of 16S rRNA. May interact with the 5'-terminal helix region of 16S rRNA. This chain is Ribosome-binding factor A, found in Staphylococcus epidermidis (strain ATCC 35984 / DSM 28319 / BCRC 17069 / CCUG 31568 / BM 3577 / RP62A).